A 289-amino-acid chain; its full sequence is Eukaryotic translation initiation factor 3 subunit G (289 aa).

2 disordered regions span residues 1-31 and 151-199; these read MSRL…VISN and DTMA…GEKM. One can recognise an RRM domain in the interval 209 to 287; the sequence is ATLRVTNVSE…LILRVEFAKK (79 aa).

It belongs to the eIF-3 subunit G family. As to quaternary structure, component of the eukaryotic translation initiation factor 3 (eIF-3) complex.

The protein resides in the cytoplasm. RNA-binding component of the eukaryotic translation initiation factor 3 (eIF-3) complex, which is involved in protein synthesis of a specialized repertoire of mRNAs and, together with other initiation factors, stimulates binding of mRNA and methionyl-tRNAi to the 40S ribosome. The eIF-3 complex specifically targets and initiates translation of a subset of mRNAs involved in cell proliferation. This subunit can bind 18S rRNA. This Coccidioides immitis (strain RS) (Valley fever fungus) protein is Eukaryotic translation initiation factor 3 subunit G.